A 261-amino-acid chain; its full sequence is Protein phosphatase inhibitor 2 (261 aa).

Residues 1-16 show a composition bias toward basic and acidic residues; sequence MNKDEEFLEEHHYKDD. The segment at 1-150 is required for binding to pppB; sequence MNKDEEFLEE…TPYHYYESEE (150 aa). The disordered stretch occupies residues 1-261; that stretch reads MNKDEEFLEE…LNANLSDDEQ (261 aa). The span at 17 to 60 shows a compositional bias: acidic residues; it reads DAIEGEEEQGEEEESDLDDDMYNIDGETNDDDDDDEAEDEESSE. Polar residues predominate over residues 123 to 134; it reads LTINDMNKSSTM. Residues 150-242 adopt a coiled-coil conformation; it reads EETDESKKYL…KKFDNLRKAH (93 aa). The segment covering 154–163 has biased composition (basic and acidic residues); sequence ESKKYLENKF. A compositionally biased stretch (basic residues) spans 195 to 206; the sequence is DKKKKKKNLKIH. The segment covering 212–225 has biased composition (acidic residues); that stretch reads DDNDDNEDEDEDET. Over residues 226–250 the composition is skewed to basic and acidic residues; that stretch reads EEKKENKKKFDNLRKAHYNEFKVVR.

This sequence belongs to the protein phosphatase inhibitor 2 family. In terms of assembly, interacts with pppB.

Its function is as follows. Inhibitor of protein-phosphatase 1 (PP1). This Dictyostelium discoideum (Social amoeba) protein is Protein phosphatase inhibitor 2 (dpiA).